Here is a 212-residue protein sequence, read N- to C-terminus: Ribosome maturation factor RimP (212 aa).

It belongs to the RimP family.

The protein localises to the cytoplasm. In terms of biological role, required for maturation of 30S ribosomal subunits. This Variovorax paradoxus (strain S110) protein is Ribosome maturation factor RimP.